Reading from the N-terminus, the 132-residue chain is Monothiol glutaredoxin-S9 (132 aa).

The segment at 16-38 (ASRPATAAAAPPPPPPRGEEEEV) is disordered. The Glutaredoxin domain maps to 35 to 131 (EEEVRRAVAE…PILKEAGALW (97 aa)). [2Fe-2S] cluster is bound at residue C55. A Responsive for interaction with TGA factors motif is present at residues 129–132 (ALWL).

It belongs to the glutaredoxin family. CC-type subfamily.

It is found in the cytoplasm. The protein resides in the nucleus. Functionally, may only reduce GSH-thiol disulfides, but not protein disulfides. The chain is Monothiol glutaredoxin-S9 (GRXS9) from Oryza sativa subsp. japonica (Rice).